Reading from the N-terminus, the 375-residue chain is ATP-sensitive inward rectifier potassium channel 15 (375 aa).

Over 1 to 60 (MDAIHIGMSSTPLVKHTAGAGLKANRPRVMSKSGHSNVRIDKVDGIYLLYLQDLWTTVID) the chain is Cytoplasmic. The helical transmembrane segment at 61–87 (MKWRYKLTLFAATFVMTWFLFGVIYYA) threads the bilayer. Over 88–113 (IAFIHGDLEPGEPISNHTPCIMKVDS) the chain is Extracellular. The helical; Pore-forming intramembrane region spans 114–130 (LTGAFLFSLESQTTIGY). A Selectivity filter motif is present at residues 127–132 (TIGYGV). The Extracellular portion of the chain corresponds to 131–139 (GVRSITEEC). A helical transmembrane segment spans residues 140-165 (PHAIFLLVAQLVITTLIEIFITGTFL). At 166–375 (AKIARPKKRA…RTLLLQQSNV (210 aa)) the chain is on the cytoplasmic side.

Belongs to the inward rectifier-type potassium channel (TC 1.A.2.1) family. KCNJ15 subfamily. In terms of assembly, can form heteromultimeric channels with Kir5.1/KCNJ16. Interacts with PATJ.

The protein localises to the membrane. It localises to the cell membrane. It catalyses the reaction K(+)(in) = K(+)(out). Its activity is regulated as follows. Channel activity is regulated by variations of cytosolic pH; reversibly inhibited by acidic pH values. Inhibited by Ba(2+) and Cs(+) in a voltage-dependent manner. Functionally, inward rectifier potassium channels are characterized by a greater tendency to allow potassium to flow into the cell rather than out of it. Their voltage dependence is regulated by the concentration of extracellular potassium; as external potassium is raised, the voltage range of the channel opening shifts to more positive voltages. The inward rectification is mainly due to the blockage of outward current by internal magnesium. This Homo sapiens (Human) protein is ATP-sensitive inward rectifier potassium channel 15 (KCNJ15).